A 487-amino-acid chain; its full sequence is Betaine aldehyde dehydrogenase (487 aa).

Positions 26, 27, and 93 each coordinate K(+). 150–152 provides a ligand contact to NAD(+); it reads GAW. Lys162 serves as the catalytic Charge relay system. NAD(+) is bound by residues 176–179 and 229–232; these read KPSE and SVPT. Leu244 is a K(+) binding site. Glu250 functions as the Proton acceptor in the catalytic mechanism. Residues Gly252, Cys284, and Glu384 each coordinate NAD(+). Cys284 functions as the Nucleophile in the catalytic mechanism. Cys284 is modified (cysteine sulfenic acid (-SOH)). Residues Lys454 and Gly457 each contribute to the K(+) site. Glu461 (charge relay system) is an active-site residue.

Belongs to the aldehyde dehydrogenase family. As to quaternary structure, dimer of dimers. Requires K(+) as cofactor.

The catalysed reaction is betaine aldehyde + NAD(+) + H2O = glycine betaine + NADH + 2 H(+). The protein operates within amine and polyamine biosynthesis; betaine biosynthesis via choline pathway; betaine from betaine aldehyde: step 1/1. Involved in the biosynthesis of the osmoprotectant glycine betaine. Catalyzes the irreversible oxidation of betaine aldehyde to the corresponding acid. The protein is Betaine aldehyde dehydrogenase of Sinorhizobium fredii (strain NBRC 101917 / NGR234).